The chain runs to 388 residues: MSALEAIKYSRGKLEVLDQLRLPHEHHYDEVSTSEEAFDCIKTMRVRGAPAIAIVAALAASVELHNGSCTATSPEEAIKYIDGRLDYLYESRPTAVDLGNAVKLLKKTVRDVKTEGLTDAEAKEAIIKAFIEASEEILAKDLKTNKSIGAFGAKWLQEQYKITDDSKITVITHCNTGSLATSGHGTALGIIRTLRDEGLLRHAYCTETRPYNQGSRLTAFELVHEGIPSTLITDSMAAALFRLRKAEENIAAVIVGADRVVRNGDTANKIGTYQLAVLAKHHGIKFMVAAPTTSIDVDTLTGDEIEIEQRKREELTQISGAVINADGSIDTSKSVRVAIADQRIGVWNPGFDVTPNEYIDAIVTEKGTVVKGEDGRFHFEDLMPERFQ.

Residue Asp258 is the Proton donor of the active site.

Belongs to the eIF-2B alpha/beta/delta subunits family. MtnA subfamily.

Its subcellular location is the cytoplasm. The protein localises to the nucleus. It catalyses the reaction 5-(methylsulfanyl)-alpha-D-ribose 1-phosphate = 5-(methylsulfanyl)-D-ribulose 1-phosphate. The protein operates within amino-acid biosynthesis; L-methionine biosynthesis via salvage pathway; L-methionine from S-methyl-5-thio-alpha-D-ribose 1-phosphate: step 1/6. Its function is as follows. Catalyzes the interconversion of methylthioribose-1-phosphate (MTR-1-P) into methylthioribulose-1-phosphate (MTRu-1-P). In Sordaria macrospora (strain ATCC MYA-333 / DSM 997 / K(L3346) / K-hell), this protein is Methylthioribose-1-phosphate isomerase.